We begin with the raw amino-acid sequence, 601 residues long: Dual specificity tyrosine-phosphorylation-regulated kinase 2 (601 aa).

Positions Met1–Val24 are disordered. At Ser30 the chain carries Phosphoserine. Thr106 bears the Phosphothreonine; by ATM mark. The Nuclear localization signal motif lies at Lys189–Arg191. The 314-residue stretch at Tyr222–Leu535 folds into the Protein kinase domain. Residues Ile228–Val236, Lys251, and Phe301–Leu304 contribute to the ATP site. The active-site Proton acceptor is the Asp348. Residue Thr381 is modified to Phosphothreonine; by MAP3K10. Phosphotyrosine; by autocatalysis is present on Tyr382. At Ser442 the chain carries Phosphoserine; by ATM. At Ser449 the chain carries Phosphoserine; by MAP3K10.

This sequence belongs to the protein kinase superfamily. CMGC Ser/Thr protein kinase family. MNB/DYRK subfamily. In terms of assembly, component of an E3 ligase complex containing DYRK2, EDD/UBR5, DDB1 and DCAF1 (EDVP complex). Interacts directly with EDD/UBR5, DDB1 and DCAF1. Interacts with SIAH2 and MDM2. Interacts with MAP3K10 and NFATC1. May also interact with CCNL2. The cofactor is Mg(2+). It depends on Mn(2+) as a cofactor. In terms of processing, autophosphorylates cotranslationally on the second tyrosine residue in the Tyr-X-Tyr motif in the activation loop, but once mature, does not have any protein tyrosine kinase activity. Phosphorylated at Thr-106 and Ser-442 by ATM in response to genotoxic stress. Under normal conditions, polyubiquitinated in the nucleus by MDM2, leading to its proteasomal degradation. Phosphorylation on Thr-106 and Ser-442 by ATM in response to genotoxic stress disrupts MDM2 binding and prevents MDM2-mediated ubiquitination and subsequent proteasomal degradation. Polyubiquitinated by SIAH2, leading to its proteasomal degradation. Polyubiquitinated by SIAH2 occurs under normal conditions, and is enhanced in response to hypoxia. Testis, after the onset of spermatogenesis.

Its subcellular location is the cytoplasm. The protein localises to the nucleus. It carries out the reaction L-seryl-[protein] + ATP = O-phospho-L-seryl-[protein] + ADP + H(+). It catalyses the reaction L-threonyl-[protein] + ATP = O-phospho-L-threonyl-[protein] + ADP + H(+). The enzyme catalyses L-tyrosyl-[protein] + ATP = O-phospho-L-tyrosyl-[protein] + ADP + H(+). Activated by autophosphorylation on the second tyrosine residue in the Tyr-X-Tyr motif in the activation loop. Inhibited by acridine analogs, purvalanol, and barely by harmine. Inhibited by leucettine and leucettine derivatives. Functionally, serine/threonine-protein kinase involved in the regulation of the mitotic cell cycle, cell proliferation, apoptosis, organization of the cytoskeleton and neurite outgrowth. Functions in part via its role in ubiquitin-dependent proteasomal protein degradation. Functions downstream of ATM and phosphorylates p53/TP53 at 'Ser-46', and thereby contributes to the induction of apoptosis in response to DNA damage. Phosphorylates NFATC1, and thereby inhibits its accumulation in the nucleus and its transcription factor activity. Phosphorylates EIF2B5 at 'Ser-544', enabling its subsequent phosphorylation and inhibition by GSK3B. Likewise, phosphorylation of NFATC1, CRMP2/DPYSL2 and CRMP4/DPYSL3 promotes their subsequent phosphorylation by GSK3B. May play a general role in the priming of GSK3 substrates. Inactivates GYS1 by phosphorylation at 'Ser-641', and potentially also a second phosphorylation site, thus regulating glycogen synthesis. Mediates EDVP E3 ligase complex formation and is required for the phosphorylation and subsequent degradation of KATNA1. Phosphorylates TERT at 'Ser-457', promoting TERT ubiquitination by the EDVP complex. Phosphorylates SIAH2, and thereby increases its ubiquitin ligase activity. Promotes the proteasomal degradation of MYC and JUN, and thereby regulates progress through the mitotic cell cycle and cell proliferation. Promotes proteasomal degradation of GLI2 and GLI3, and thereby plays a role in smoothened and sonic hedgehog signaling. Plays a role in cytoskeleton organization and neurite outgrowth via its phosphorylation of DCX and DPYSL2. Phosphorylates CRMP2/DPYSL2, CRMP4/DPYSL3, DCX, EIF2B5, EIF4EBP1, GLI2, GLI3, GYS1, JUN, MDM2, MYC, NFATC1, p53/TP53, TAU/MAPT and KATNA1. Can phosphorylate histone H1, histone H3 and histone H2B (in vitro). Can phosphorylate CARHSP1 (in vitro). The sequence is that of Dual specificity tyrosine-phosphorylation-regulated kinase 2 (DYRK2) from Homo sapiens (Human).